The primary structure comprises 442 residues: Pyruvate dehydrogenase complex protein X component, mitochondrial (442 aa).

Residues 1-35 (MASLAAACRVSARLAARKLQHDAAVRGFRSSAAAL) constitute a mitochondrion transit peptide. In terms of domain architecture, Lipoyl-binding spans 37-113 (AQNFMMPALS…QVGTRIAVVA (77 aa)). Lys-78 carries the N6-lipoyllysine modification. Residues 119 to 169 (ITKLEIPPDEGPQQLKAAAPAPAPTPAPAPASPQPQFAAPTPSPPKASTKV) are disordered. Residues 139-151 (APAPTPAPAPASP) are compositionally biased toward pro residues. Residues 152-169 (QPQFAAPTPSPPKASTKV) are compositionally biased toward low complexity. Residues 175–215 (PLLPSVHQLIKENGLDESAVSNITPTGPGGRILKGDVLAYL) enclose the Peripheral subunit-binding (PSBD) domain. Positions 244–269 (AKPVEPEKPQEEKASAPAPAPRAPEP) are disordered. The span at 245–257 (KPVEPEKPQEEKA) shows a compositional bias: basic and acidic residues. Positions 317 to 336 (PLPTNYQPTADELFDQVLGL) are interaction to the E2 core.

This sequence belongs to the 2-oxoacid dehydrogenase family. As to quaternary structure, eukaryotic pyruvate dehydrogenase (PDH) complexes are organized as a core consisting of the oligomeric dihydrolipoamide acetyl-transferase (E2), around which are arranged multiple copies of pyruvate dehydrogenase (E1), dihydrolipoamide dehydrogenase (E3) and protein X (E3BP) bound by non-covalent bonds. The Chaetomium thermophilum PDH complex contains 60 E2 units, 12 E3BP units, about 20 E1 units, and 12 or more E3 units. The units are organized in 1 E2 60-mer, 4 E3BP trimers, about 20 E1 tetramers, and a maximum of 12 E3 dimers. The E3BP trimers are bound inside the icosahedral core with tetrahedral symmetry.

Its subcellular location is the mitochondrion. Its function is as follows. The 10-megadalton pyruvate dehydrogenase complex contains multiple copies of three enzymatic components: pyruvate dehydrogenase (E1), dihydrolipoamide acetyltransferase (E2) and lipoamide dehydrogenase (E3) and catalyzes the overall oxidative decarboxylation of pyruvate to form acetyl-CoA and CO(2). E3BP is responsible for tethering E3 in proximity to the core, forming the entire metabolon, and the number of E3s is limited by the number of E3BPs. Within the complex, pyruvate and thiamine pyrophosphate (TPP or vitamin B1) are bound by pyruvate dehydrogenase E1 subunits alpha and beta and pyruvate is decarboxylated leading to the 2-carbon hydrohyethyl bound to TPP. The E2 component contains covalently-bound lipoyl cofactors and transfers the hydroxyethyl group from TPP to an oxidized form of covalently bound lipoamide, and the resulting acetyl group is then transferred to free coenzyme A to form acetyl-CoA and reduced dihydrolipoamide-E2. Finally, the flavoprotein dihydrolipoamide dehydrogenase (E3) re-oxidizes the lipoyl group of dihydrolipoamide-E2 to form lipoamide-E2 and NADH. A fourth subunit, E3BP, is responsible for tethering E3 in proximity to the core, forming the entire metabolon. This is Pyruvate dehydrogenase complex protein X component, mitochondrial from Chaetomium thermophilum (strain DSM 1495 / CBS 144.50 / IMI 039719) (Thermochaetoides thermophila).